A 458-amino-acid polypeptide reads, in one-letter code: Hepatocyte nuclear factor 3-beta (458 aa).

The interval 14-93 is transactivation domain 1; that stretch reads DWSSYYAEPE…AGAMAGMSGS (80 aa). The Nuclear localization signal signature appears at 106–113; sequence LSPSLSPL. Thr-156 bears the Phosphothreonine; by PKB/AKT1 mark. Residues 159 to 252 constitute a DNA-binding region (fork-head); sequence KPPYSYISLI…ENGCYLRRQK (94 aa). Phosphoserine is present on residues Ser-212 and Ser-283. Residues 286 to 365 are disordered; that stretch reads QLGEAAGSAS…PGLPPEAHLK (80 aa). The segment covering 294-310 has biased composition (polar residues); sequence ASETPAGTESPHSSASP. The residue at position 301 (Thr-301) is a Phosphothreonine. Residues Ser-303, Ser-306, Ser-307, and Ser-309 each carry the phosphoserine modification. Residues 339 to 352 show a composition bias toward low complexity; it reads PGQQQQAAAHLLGP. Positions 361 to 458 are transactivation domain 2; sequence EAHLKPEHHY…VYSRPIMNSS (98 aa). A phosphoserine mark is found at Ser-437 and Ser-458.

Binds DNA as a monomer. Binds TLE1. Interacts with FOXA1 and FOXA3. Interacts with PRKDC. Interacts with AKT1. Interacts with TET1; this interaction may recruit TET1 to specific genomic loci to mediate their demethylation. In terms of processing, phosphorylation on Thr-156 abolishes binding to target promoters and subsequent transcription activation upon insulin stimulation. Liver.

Its subcellular location is the nucleus. It localises to the cytoplasm. In terms of biological role, transcription factor that is involved in embryonic development, establishment of tissue-specific gene expression and regulation of gene expression in differentiated tissues. Is thought to act as a 'pioneer' factor opening the compacted chromatin for other proteins through interactions with nucleosomal core histones and thereby replacing linker histones at target enhancer and/or promoter sites. Binds DNA with the consensus sequence 5'-[AC]A[AT]T[AG]TT[GT][AG][CT]T[CT]-3'. In embryonic development is required for notochord formation. Involved in the development of multiple endoderm-derived organ systems such as the liver, pancreas and lungs; FOXA1 and FOXA2 seem to have at least in part redundant roles. Originally described as a transcription activator for a number of liver genes such as AFP, albumin, tyrosine aminotransferase, PEPCK, etc. Interacts with the cis-acting regulatory regions of these genes. Involved in glucose homeostasis; regulates the expression of genes important for glucose sensing in pancreatic beta-cells and glucose homeostasis. Involved in regulation of fat metabolism. Acts synergistically with ONECUT1 to activate transcription of female-specific CYP2C12; the function is inhibited by growth hormone-activated STAT5B. Acts synergistically with HNF4A to activate transcription of APOA1. This chain is Hepatocyte nuclear factor 3-beta (Foxa2), found in Rattus norvegicus (Rat).